Here is a 901-residue protein sequence, read N- to C-terminus: HTH-type transcriptional regulator MalT (901 aa).

Residue 39 to 46 (SPAGYGKT) participates in ATP binding. Residues 829–894 (ELIRTSPLTQ…DAVQHAQQLL (66 aa)) form the HTH luxR-type domain. The segment at residues 853–872 (NEQIAGELDVAATTIKTHIR) is a DNA-binding region (H-T-H motif).

This sequence belongs to the MalT family. In terms of assembly, monomer in solution. Oligomerizes to an active state in the presence of the positive effectors ATP and maltotriose.

With respect to regulation, activated by ATP and maltotriose, which are both required for DNA binding. Positively regulates the transcription of the maltose regulon whose gene products are responsible for uptake and catabolism of malto-oligosaccharides. Specifically binds to the promoter region of its target genes, recognizing a short DNA motif called the MalT box. The protein is HTH-type transcriptional regulator MalT of Klebsiella pneumoniae subsp. pneumoniae (strain ATCC 700721 / MGH 78578).